Reading from the N-terminus, the 364-residue chain is TD and POZ domain-containing protein 2 (364 aa).

One can recognise an MATH domain in the interval 19–149 (EFCYEWTISN…KDKLTLCCKV (131 aa)). Residues 188 to 255 (TDCSLLVAGH…IYTGKAPTLH (68 aa)) enclose the BTB domain.

The protein belongs to the Tdpoz family.

This chain is TD and POZ domain-containing protein 2, found in Mus musculus (Mouse).